Reading from the N-terminus, the 133-residue chain is Large ribosomal subunit protein bL20 (133 aa).

This sequence belongs to the bacterial ribosomal protein bL20 family.

Its function is as follows. Binds directly to 23S ribosomal RNA and is necessary for the in vitro assembly process of the 50S ribosomal subunit. It is not involved in the protein synthesizing functions of that subunit. The polypeptide is Large ribosomal subunit protein bL20 (Bartonella quintana (strain Toulouse) (Rochalimaea quintana)).